A 329-amino-acid chain; its full sequence is Aurora kinase B (329 aa).

Residues 1 to 14 show a composition bias toward basic residues; it reads MTLSRAKHANRNHL. A disordered region spans residues 1–21; that stretch reads MTLSRAKHANRNHLPHLLAKV. The 253-residue stretch at 53–305 folds into the Protein kinase domain; sequence FEMGAHLGRG…LVDVMTHYWV (253 aa). ATP-binding positions include 59-67 and Lys82; that span reads LGRGKFGRV. Catalysis depends on Asp178, which acts as the Proton acceptor.

Belongs to the protein kinase superfamily. Ser/Thr protein kinase family. Aurora subfamily. As to quaternary structure, interacts with Incenp and Cdc37. It depends on Mg(2+) as a cofactor.

Its subcellular location is the chromosome. It is found in the cytoplasm. The protein resides in the cytoskeleton. The protein localises to the midbody. The enzyme catalyses L-seryl-[protein] + ATP = O-phospho-L-seryl-[protein] + ADP + H(+). It catalyses the reaction L-threonyl-[protein] + ATP = O-phospho-L-threonyl-[protein] + ADP + H(+). Serine/threonine-protein kinase that mediates both meiotic and mitotic chromosome segregation. Required for histone H3 'Ser-10' phosphorylation. Phosphorylates mei-S332 within residues 124-126 and stabilizes its association with centromeres during meiosis. May regulate the function of the ESCRT-III complex core component shrb during abscission of germline cells in oogenesis. The chain is Aurora kinase B from Drosophila melanogaster (Fruit fly).